The primary structure comprises 382 residues: SOX domain-containing protein dichaete (382 aa).

Disordered stretches follow at residues 53-142 (GGSP…EGHI) and 346-382 (YPSS…PVLY). Over residues 60 to 69 (AGQGVNGSSG) the composition is skewed to gly residues. Low complexity predominate over residues 96–123 (NSSIGSAGSLGSQSSLGSNGSGLNSSSG). Residues 142–210 (IKRPMNAFMV…LHMKEHPDYK (69 aa)) constitute a DNA-binding region (HMG box). Residues 347–360 (PSSSTSSPGSSPGT) show a composition bias toward low complexity.

In terms of tissue distribution, initially expressed in a pair-rule-like pattern which is rapidly replaced by strong neuroectoderm expression.

The protein resides in the nucleus. Essential for segmentation and CNS development. May modulate the actions of other transcription factors, including gap and pair-rule proteins. The chain is SOX domain-containing protein dichaete (D) from Drosophila melanogaster (Fruit fly).